Reading from the N-terminus, the 692-residue chain is DNA repair protein RAD34 (692 aa).

The interval 1–38 (MAKRLLESSQNDQANRKNSKIEKKEVSFYEEEETDDSF) is disordered. Residues 28-38 (FYEEEETDDSF) show a composition bias toward acidic residues.

Belongs to the XPC family.

It is found in the nucleus. Involved in nucleotide excision repair (NER) of damaged ribosomal DNA (rDNA). Required for the repair of the RNA polymerase I-transcribed strand of rDNA. The protein is DNA repair protein RAD34 (RAD34) of Saccharomyces cerevisiae (strain ATCC 204508 / S288c) (Baker's yeast).